The sequence spans 679 residues: NADPH--cytochrome P450 reductase (679 aa).

The Lumenal portion of the chain corresponds to 1–21; it reads MADSHGDTGATMPEAAAQEAS. A helical transmembrane segment spans residues 22-42; that stretch reads VFSMTDVVLFSLIVGLITYWF. At 43–679 the chain is on the cytoplasmic side; sequence LFRKKKEEVP…KGRYSLDVWS (637 aa). Ser-64 bears the Phosphoserine mark. In terms of domain architecture, Flavodoxin-like spans 81–225; it reads IVVFYGSQTG…DFITWREQFW (145 aa). FMN is bound by residues 87 to 92, 139 to 142, 174 to 183, and Asp-209; these read SQTGTA, ATYG, and LGNKTYEHFN. Positions 280-522 constitute an FAD-binding FR-type domain; the sequence is KNPFLATVTT…FVRKSQFRLP (243 aa). Position 299 (Arg-299) interacts with NADP(+). FAD contacts are provided by residues Arg-425, 455-458, 473-475, Tyr-479, and 489-492; these read RYYS, CAV, and GVAT. Residues Thr-536, 597–598, 603–607, and Asp-640 contribute to the NADP(+) site; these read SR and KVYVQ. Residue Trp-678 coordinates FAD.

Belongs to the NADPH--cytochrome P450 reductase family. The protein in the N-terminal section; belongs to the flavodoxin family. It in the C-terminal section; belongs to the flavoprotein pyridine nucleotide cytochrome reductase family. FAD is required as a cofactor. Requires FMN as cofactor.

It is found in the endoplasmic reticulum membrane. It carries out the reaction 2 oxidized [cytochrome P450] + NADPH = 2 reduced [cytochrome P450] + NADP(+) + H(+). This enzyme is required for electron transfer from NADP to cytochrome P450 in microsomes. It can also provide electron transfer to heme oxygenase and cytochrome B5. The sequence is that of NADPH--cytochrome P450 reductase from Oryctolagus cuniculus (Rabbit).